Here is a 561-residue protein sequence, read N- to C-terminus: Arginine--tRNA ligase (561 aa).

Positions 123-133 (PNIAKDMHVGH) match the 'HIGH' region motif.

It belongs to the class-I aminoacyl-tRNA synthetase family. Monomer.

The protein resides in the cytoplasm. The enzyme catalyses tRNA(Arg) + L-arginine + ATP = L-arginyl-tRNA(Arg) + AMP + diphosphate. This is Arginine--tRNA ligase (argS) from Chlamydia pneumoniae (Chlamydophila pneumoniae).